We begin with the raw amino-acid sequence, 419 residues long: MTQEQANQSETKPAFDFKPFAPGYAEDPFPAIERLREATPIFYWDEGRSWVLTRYHDVSAVFRDERFAVSREEWESSAEYSSAIPELSDMKKYGLFGLPPEDHARVRKLVNPSFTSRAIDLLRAEIQRTVDQLLDARSGQEEFDVVRDYAEGIPMRAISALLKVPAECDEKFRRFGSATARALGVGLVPRVDEETKTLVASVTEGLALLHGVLDERRRNPLENDVLTMLLQAEADGSRLSTKELVALVGAIIAAGTDTTIYLIAFAVLNLLRSPEALELVKAEPGLMRNALDEVLRFDNILRIGTVRFARQDLEYCGASIKKGEMVFLLIPSALRDGTVFSRPDVFDVRRDTSASLAYGRGPHVCPGVSLARLEAEIAVGTIFRRFPEMKLKETPVFGYHPAFRNIESLNVILKPSKAG.

Substrate-binding residues include Ala180 and Gly304. A heme-binding site is contributed by Cys365.

This sequence belongs to the cytochrome P450 family. It depends on heme as a cofactor.

The enzyme catalyses epothilone C + 2 reduced [2Fe-2S]-[ferredoxin] + O2 + 2 H(+) = epothilone A + 2 oxidized [2Fe-2S]-[ferredoxin] + H2O. The catalysed reaction is epothilone D + 2 reduced [2Fe-2S]-[ferredoxin] + O2 + 2 H(+) = epothilone B + 2 oxidized [2Fe-2S]-[ferredoxin] + H2O. It functions in the pathway secondary metabolite biosynthesis; epothilone biosynthesis. Its function is as follows. Involved in the biosynthesis of epothilones, macrolactones which have a narrow anti-fungal spectrum and microtubule-stabilizing activity. Catalyzes the epoxidation of epothilones C and D to epothilones A and B, respectively. The protein is Epothilone C/D epoxidase (cyp167A1) of Sorangium cellulosum (Polyangium cellulosum).